We begin with the raw amino-acid sequence, 278 residues long: Secoisolariciresinol dehydrogenase (278 aa).

NAD(+)-binding positions include 23–28, D47, V73, and N99; that span reads GGAGGI. Substrate contacts are provided by S104 and S164. Y167 (proton donor/acceptor) is an active-site residue. Positions 171 and 200 each coordinate NAD(+).

Belongs to the short-chain dehydrogenases/reductases (SDR) family. In terms of assembly, homotetramer. Mostly expressed in stems and rhizomes, and, to a lower extent, in leaves.

The enzyme catalyses (-)-secoisolariciresinol + 2 NAD(+) = (-)-matairesinol + 2 NADH + 2 H(+). Its pathway is aromatic compound metabolism; phenylpropanoid biosynthesis. Its function is as follows. Oxidoreductase involved in lignan biosynthesis. Also involved in the biosynthesis of etoposide, a chemotherapeutic compound of the topoisomerase inhibitor family. Catalyzes the stereospecific conversion of (-)-secoisolariciresinol to (-)-matairesinol via a lactol intermediate. In Sinopodophyllum hexandrum (Himalayan may apple), this protein is Secoisolariciresinol dehydrogenase.